The following is a 527-amino-acid chain: NADH-ubiquinone oxidoreductase chain 5 (527 aa).

14 helical membrane passes run isoleucine 3–proline 23, phenylalanine 43–valine 63, phenylalanine 75–serine 95, isoleucine 98–phenylalanine 118, phenylalanine 141–methionine 161, leucine 168–proline 188, valine 197–phenylalanine 217, phenylalanine 226–leucine 246, methionine 263–valine 283, leucine 318–phenylalanine 338, tyrosine 357–phenylalanine 377, valine 398–methionine 418, valine 432–leucine 452, and tyrosine 507–cysteine 527.

It belongs to the complex I subunit 5 family.

It is found in the mitochondrion inner membrane. The enzyme catalyses a ubiquinone + NADH + 5 H(+)(in) = a ubiquinol + NAD(+) + 4 H(+)(out). In terms of biological role, core subunit of the mitochondrial membrane respiratory chain NADH dehydrogenase (Complex I) that is believed to belong to the minimal assembly required for catalysis. Complex I functions in the transfer of electrons from NADH to the respiratory chain. The immediate electron acceptor for the enzyme is believed to be ubiquinone. This chain is NADH-ubiquinone oxidoreductase chain 5, found in Caenorhabditis elegans.